The chain runs to 703 residues: Fanconi anemia group B protein homolog (703 aa).

Belongs to the multisubunit FA complex composed of FANCA, FANCB, FANCC, FANCE, FANCF, FANCG, FANCL/PHF9 and FANCM.

Its subcellular location is the nucleus. In terms of biological role, DNA repair protein required for FANCD2 ubiquitination. In Mus musculus (Mouse), this protein is Fanconi anemia group B protein homolog (Fancb).